Consider the following 44-residue polypeptide: Benzaldehyde dehydrogenase [NAD(+)] II (44 aa).

Belongs to the aldehyde dehydrogenase family.

It carries out the reaction benzaldehyde + NAD(+) + H2O = benzoate + NADH + 2 H(+). The sequence is that of Benzaldehyde dehydrogenase [NAD(+)] II from Acinetobacter guillouiae (Acinetobacter genomosp. 11).